The sequence spans 578 residues: Aspartate--tRNA ligase (578 aa).

Glu169 contacts L-aspartate. An aspartate region spans residues 191-194; the sequence is QTFK. Residue Arg213 coordinates L-aspartate. ATP contacts are provided by residues 213–215 and Gln222; that span reads RDE. Residue His440 participates in L-aspartate binding. ATP is bound at residue Glu474. Arg481 contributes to the L-aspartate binding site. 526–529 contacts ATP; that stretch reads GLDR.

This sequence belongs to the class-II aminoacyl-tRNA synthetase family. Type 1 subfamily. Homodimer.

The protein localises to the cytoplasm. The catalysed reaction is tRNA(Asp) + L-aspartate + ATP = L-aspartyl-tRNA(Asp) + AMP + diphosphate. In terms of biological role, catalyzes the attachment of L-aspartate to tRNA(Asp) in a two-step reaction: L-aspartate is first activated by ATP to form Asp-AMP and then transferred to the acceptor end of tRNA(Asp). The chain is Aspartate--tRNA ligase from Ureaplasma parvum serovar 3 (strain ATCC 700970).